The sequence spans 550 residues: CTP synthase (550 aa).

An amidoligase domain region spans residues 1–270 (MTKYVFVTGG…DNIVCEALGL (270 aa)). Ser13 contributes to the CTP binding site. A UTP-binding site is contributed by Ser13. Residues 14–19 (SLGKGI) and Asp71 each bind ATP. Mg(2+) is bound by residues Asp71 and Glu144. CTP contacts are provided by residues 151–153 (DIE), 191–196 (KTKPTQ), and Lys227. Residues 191 to 196 (KTKPTQ) and Lys227 contribute to the UTP site. Residues 295–545 (TIGMVGKYVD…IRAALEHKAQ (251 aa)) form the Glutamine amidotransferase type-1 domain. L-glutamine is bound at residue Gly356. Cys383 functions as the Nucleophile; for glutamine hydrolysis in the catalytic mechanism. L-glutamine contacts are provided by residues 384-387 (LGMQ) and Glu407. Positions 430–459 (VERRDNSSDLGGTMRKGAQRCPIRPGTRAQ) are disordered. Position 473 (Arg473) interacts with L-glutamine. Active-site residues include His518 and Glu520.

Belongs to the CTP synthase family. In terms of assembly, homotetramer.

It catalyses the reaction UTP + L-glutamine + ATP + H2O = CTP + L-glutamate + ADP + phosphate + 2 H(+). The catalysed reaction is L-glutamine + H2O = L-glutamate + NH4(+). The enzyme catalyses UTP + NH4(+) + ATP = CTP + ADP + phosphate + 2 H(+). It participates in pyrimidine metabolism; CTP biosynthesis via de novo pathway; CTP from UDP: step 2/2. With respect to regulation, allosterically activated by GTP, when glutamine is the substrate; GTP has no effect on the reaction when ammonia is the substrate. The allosteric effector GTP functions by stabilizing the protein conformation that binds the tetrahedral intermediate(s) formed during glutamine hydrolysis. Inhibited by the product CTP, via allosteric rather than competitive inhibition. In terms of biological role, catalyzes the ATP-dependent amination of UTP to CTP with either L-glutamine or ammonia as the source of nitrogen. Regulates intracellular CTP levels through interactions with the four ribonucleotide triphosphates. This chain is CTP synthase, found in Bordetella parapertussis (strain 12822 / ATCC BAA-587 / NCTC 13253).